The following is a 2605-amino-acid chain: Non-reducing polyketide synthase dbaI (2605 aa).

Residues 97–243 (PNTLLIPLVM…PASEISDLHR (147 aa)) are N-terminal acylcarrier protein transacylase domain (SAT). The active-site Nucleophile; for transacylase activity is the Cys144. His262 acts as the Proton donor/acceptor; for transacylase activity in catalysis. Residues 382–798 (ENDIAVVGMS…GSNASIVVTQ (417 aa)) enclose the Ketosynthase family 3 (KS3) domain. Catalysis depends on for beta-ketoacyl synthase activity residues Cys547, His682, and His721. Positions 908–1195 (FGGQVSTFVG…VTNMASRALG (288 aa)) are malonyl-CoA:ACP transacylase (MAT) domain. The tract at residues 1285–1420 (PNTLLTFVGY…GRVIFRSISD (136 aa)) is N-terminal hotdog fold. The region spanning 1285–1596 (PNTLLTFVGY…YVKIPKASMS (312 aa)) is the PKS/mFAS DH domain. The tract at residues 1316-1594 (LIRGHIIAQT…ISYVKIPKAS (279 aa)) is product template (PT) domain. His1320 (proton acceptor; for dehydratase activity) is an active-site residue. The segment at 1447–1596 (EVDEVLQNRN…YVKIPKASMS (150 aa)) is C-terminal hotdog fold. Asp1504 acts as the Proton donor; for dehydratase activity in catalysis. Residues 1665-1739 (GQLTQRIKSI…SLIKCVRKAM (75 aa)) enclose the Carrier domain. Ser1699 is subject to O-(pantetheine 4'-phosphoryl)serine. Positions 1742-1780 (DADSAEYTTEQSTSEAADSDDKSTNYTTPSTPGEEALDM) are disordered. Polar residues predominate over residues 1747-1757 (EYTTEQSTSEA). The interval 1963 to 2151 (DWPLNRLFYR…VGYGHVDWTD (189 aa)) is methyltransferase domain. The tract at residues 2230–2473 (VTGATGSLGC…LSWTPVDVVA (244 aa)) is NADPH-binding (R) domain.

It catalyses the reaction 4 malonyl-CoA + acetyl-CoA + AH2 + S-adenosyl-L-methionine + 3 H(+) = 2,4-dihydroxy-3-methyl-6-(2-oxopropyl)benzaldehyde + A + S-adenosyl-L-homocysteine + 4 CO2 + 5 CoA + H2O. It functions in the pathway secondary metabolite biosynthesis. In terms of biological role, non-reducing polyketide synthase; part of the gene cluster that mediates the biosynthesis of the antibiotic 2,4-dihydroxy-3-methyl-6-(2-oxopropyl)benzaldehyde (DHMBA) and its derivatives. The direct non-reducing polyketide synthase dbaI product is 2,4-dihydroxy-3-methyl-6-(2-oxopropyl)benzaldehyde (DHMBA), produced by condensation of one acetyl-CoA starter unit with 4 malonyl-CoA units and one methylation step. The FAD-dependent monooxygenase dbaH is responsible for the synthesis of yellow pigments derived from the oxidation of DHMBA. The roles of dbaB, C, E and F have still to be determined. The chain is Non-reducing polyketide synthase dbaI from Emericella nidulans (strain FGSC A4 / ATCC 38163 / CBS 112.46 / NRRL 194 / M139) (Aspergillus nidulans).